The sequence spans 551 residues: Arginine--tRNA ligase (551 aa).

The 'HIGH' region signature appears at 125-135 (ANPTGPLHIGH).

The protein belongs to the class-I aminoacyl-tRNA synthetase family. As to quaternary structure, monomer.

The protein localises to the cytoplasm. The enzyme catalyses tRNA(Arg) + L-arginine + ATP = L-arginyl-tRNA(Arg) + AMP + diphosphate. This Nitratidesulfovibrio vulgaris (strain DP4) (Desulfovibrio vulgaris) protein is Arginine--tRNA ligase.